A 495-amino-acid polypeptide reads, in one-letter code: MEHTEKSKGPAEKGLLGKIRRYLSKRPLPSPTDRKKFDHDFAISTSFHGIHNIAQNQNKVRKVIWLSVVLGSVSLLVWQIYSRLVNYFMWPTTTSIEVQYVEKIEFPAVTFCNLNRFQTEAVSRFGIIFFLWDIVSKVLRLQEISGNNTGSPEALDFVASHRNFSITEFVKNNGFYLNHDTLVHCEFFGKTCDPKDFKHVFTEYGNCFTFNYGENVQSKNKVSVSGRGLKLLLDVHQEEFTDNPVPGFADAGVIFVIHSPKKEPQFDGLGLSSPVGMHARVTIRQLKTIHQEYPWGECNPDIKLRNFTTYSTYGCLKECKAKHIQRLCGCLPFLLPGNGVECDLLKYYNCVSPILDHIERKGLCTMGTHNSSCPVPCEETEYPATIAYSTFPSQRATKFLAKKLNQSQEYIRENLVNIEINYSDLNYKITQQQKAVSVPELLADVGGQLGLFCGASLITIIEIIEYLFTSFYWVFIFFLLKILEMIQRTSPPQTV.

Residues methionine 1–serine 30 form a binds the plasma membrane and stabilizes the channel in the closed state region. The Cytoplasmic portion of the chain corresponds to methionine 1–arginine 61. Residues lysine 62–serine 82 traverse the membrane as a helical segment. The Extracellular segment spans residues arginine 83 to threonine 459. 6 disulfides stabilise this stretch: cysteine 112-cysteine 207, cysteine 185-cysteine 192, cysteine 298-cysteine 377, cysteine 315-cysteine 373, cysteine 328-cysteine 350, and cysteine 330-cysteine 342. Residues asparagine 147 and asparagine 163 are each glycosylated (N-linked (GlcNAc...) asparagine). Asparagine 306 carries N-linked (GlcNAc...) asparagine glycosylation. N-linked (GlcNAc...) asparagine glycosylation is found at asparagine 370, asparagine 405, and asparagine 421. Residues glycine 454–serine 456 carry the GAS motif; ion selectivity filter motif. The helical transmembrane segment at isoleucine 460 to leucine 480 threads the bilayer. The Cytoplasmic segment spans residues lysine 481 to valine 495.

The protein belongs to the amiloride-sensitive sodium channel (TC 1.A.6) family. ASIC5 subfamily. As to quaternary structure, forms homotrimeric channels. Expressed by cholangiocytes (at protein level). Detected in brain, liver, duodenum, jejunum, ileum and testis.

It is found in the apical cell membrane. The protein localises to the cell membrane. The catalysed reaction is Na(+)(in) = Na(+)(out). It catalyses the reaction Li(+)(in) = Li(+)(out). The enzyme catalyses K(+)(in) = K(+)(out). It carries out the reaction H(+)(in) = H(+)(out). With respect to regulation, inhibited by the diuretic drug amiloride. Inhibited by diminazene. Inhibited by extracellular Ca(2+). Forms bile acid-gated sodium channels and may play a role in bile acid-dependent absorption and secretion by epithelial cells of the bile ducts. Displays high selectivity for sodium ions but can also permit the permeation of other cations. The gating could be indirect and the consequence of alterations of the membrane environment of the channel by bile acids. As a sodium channel of type II unipolar brush cells of the vestibulocerebellum, controlling the electrical activity of these cells, could play a role in motor coordination and balance. This Rattus norvegicus (Rat) protein is Bile acid-sensitive ion channel.